We begin with the raw amino-acid sequence, 337 residues long: Nicotinate-nucleotide--dimethylbenzimidazole phosphoribosyltransferase (337 aa).

Glutamate 305 (proton acceptor) is an active-site residue.

Belongs to the CobT family.

It catalyses the reaction 5,6-dimethylbenzimidazole + nicotinate beta-D-ribonucleotide = alpha-ribazole 5'-phosphate + nicotinate + H(+). The protein operates within nucleoside biosynthesis; alpha-ribazole biosynthesis; alpha-ribazole from 5,6-dimethylbenzimidazole: step 1/2. Functionally, catalyzes the synthesis of alpha-ribazole-5'-phosphate from nicotinate mononucleotide (NAMN) and 5,6-dimethylbenzimidazole (DMB). The polypeptide is Nicotinate-nucleotide--dimethylbenzimidazole phosphoribosyltransferase (Jannaschia sp. (strain CCS1)).